A 94-amino-acid chain; its full sequence is PqqA binding protein (94 aa).

This sequence belongs to the PqqD family. Monomer. Interacts with PqqE.

It functions in the pathway cofactor biosynthesis; pyrroloquinoline quinone biosynthesis. Functions as a PqqA binding protein and presents PqqA to PqqE, in the pyrroloquinoline quinone (PQQ) biosynthetic pathway. In Pseudomonas savastanoi pv. phaseolicola (strain 1448A / Race 6) (Pseudomonas syringae pv. phaseolicola (strain 1448A / Race 6)), this protein is PqqA binding protein.